The following is a 134-amino-acid chain: Transcription factor atoh7 (134 aa).

The disordered stretch occupies residues Met1 to Met27. Basic and acidic residues predominate over residues Ser15 to Met27. Residues Arg28–Leu80 enclose the bHLH domain.

Its subcellular location is the nucleus. It is found in the perikaryon. The protein resides in the cell projection. It localises to the axon. Transcription factor that binds to DNA at the consensus sequence 5'-CAG[GC]TG-3'. Involved in the differentiation of retinal ganglion cells, photoreceptor population and optic nerve development. Required for retinal circadian rhythm photoentrainment. The polypeptide is Transcription factor atoh7 (Danio rerio (Zebrafish)).